The chain runs to 141 residues: Hemoglobin subunit alpha-1 (141 aa).

The 141-residue stretch at 1-141 (VLSAADKGNV…VSTVLTSKYR (141 aa)) folds into the Globin domain. Histidine 58 contacts O2. A heme b-binding site is contributed by histidine 87.

It belongs to the globin family. In terms of assembly, heterotetramer of two alpha chains and two beta chains. As to expression, red blood cells.

Functionally, involved in oxygen transport from the lung to the various peripheral tissues. This chain is Hemoglobin subunit alpha-1, found in Bos mutus grunniens (Wild yak).